Here is a 295-residue protein sequence, read N- to C-terminus: Tyrosine recombinase XerC (295 aa).

The 85-residue stretch at 1 to 85 (MQTYLQKYWN…ALRQFLAFLV (85 aa)) folds into the Core-binding (CB) domain. The 180-residue stretch at 106 to 285 (HLPKNINAEQ…NFQHLAEVYD (180 aa)) folds into the Tyr recombinase domain. Catalysis depends on residues R145, K169, H237, R240, and H263. Residue Y272 is the O-(3'-phospho-DNA)-tyrosine intermediate of the active site.

This sequence belongs to the 'phage' integrase family. XerC subfamily. As to quaternary structure, forms a cyclic heterotetrameric complex composed of two molecules of XerC and two molecules of XerD.

Its subcellular location is the cytoplasm. Site-specific tyrosine recombinase, which acts by catalyzing the cutting and rejoining of the recombining DNA molecules. The XerC-XerD complex is essential to convert dimers of the bacterial chromosome into monomers to permit their segregation at cell division. It also contributes to the segregational stability of plasmids. This Mannheimia succiniciproducens (strain KCTC 0769BP / MBEL55E) protein is Tyrosine recombinase XerC.